Consider the following 244-residue polypeptide: Phosphoadenosine 5'-phosphosulfate reductase (244 aa).

The Nucleophile; cysteine thiosulfonate intermediate role is filled by C239.

The protein belongs to the PAPS reductase family. CysH subfamily.

It localises to the cytoplasm. The enzyme catalyses [thioredoxin]-disulfide + sulfite + adenosine 3',5'-bisphosphate + 2 H(+) = [thioredoxin]-dithiol + 3'-phosphoadenylyl sulfate. The protein operates within sulfur metabolism; hydrogen sulfide biosynthesis; sulfite from sulfate: step 3/3. In terms of biological role, catalyzes the formation of sulfite from phosphoadenosine 5'-phosphosulfate (PAPS) using thioredoxin as an electron donor. The polypeptide is Phosphoadenosine 5'-phosphosulfate reductase (Klebsiella pneumoniae subsp. pneumoniae (strain ATCC 700721 / MGH 78578)).